The sequence spans 783 residues: Protein DWD HYPERSENSITIVE TO UV-B 1 (783 aa).

WD repeat units lie at residues 145 to 198 (GEFT…LKLP) and 212 to 256 (SDSS…DPSL). A Nuclear localization signal motif is present at residues 382-389 (RKKESVVR). WD repeat units lie at residues 439 to 480 (DNSR…IFRY), 485 to 525 (GSQS…STVT), 538 to 577 (DEFD…RLQV), 581 to 621 (MHQE…SRPC), 625 to 664 (SSTK…LHLN), and 666 to 710 (EIVP…RRLR).

In terms of assembly, interacts directly with DDB1A. Binds to COP1 and RUP1.

The protein localises to the nucleus. Its function is as follows. May act as a substrate receptor of a CUL4-RING E3 ubiquitin-protein ligase (CRL4) complex involved in the negative regulation of cellular responses to ultraviolet-B (UV-B) illumination, likely in coordination with RUP1. Interacts with COP1 and probably prevents the formation of active UVR8-COP1 complex, thus avoiding UVR8-COP1-mediated positive regulation of UV-B responses. In Arabidopsis thaliana (Mouse-ear cress), this protein is Protein DWD HYPERSENSITIVE TO UV-B 1.